Consider the following 527-residue polypeptide: Peptidoglycan O-acetyltransferase (527 aa).

Transmembrane regions (helical) follow at residues 11–31 (VFVL…VGFL), 55–75 (LFFY…SIVF), 96–116 (LILG…TDFF), 131–151 (LHLI…AYLM), 187–207 (HFLD…GPIV), 228–248 (NIAL…VIAD), 280–300 (LYFD…FFNI), 352–372 (LILV…FIIW), 397–417 (MPKI…WVFF), 463–483 (IMYA…SFCL), and 505–525 (LLLS…FLYF). The active site involves His-363.

Belongs to the membrane-bound acyltransferase family.

It localises to the cell membrane. Its function is as follows. Catalyzes the O-acetylation of peptidoglycan (PG), an important mechanism that appears to confer lysozyme resistance and contributes to pathogen persistence in the host. In Helicobacter pylori (strain ATCC 700392 / 26695) (Campylobacter pylori), this protein is Peptidoglycan O-acetyltransferase (patA).